A 147-amino-acid polypeptide reads, in one-letter code: Small ribosomal subunit protein bS6 (147 aa).

Residues 114-147 (GKGTRAAEQAAAAEAAAPAAAPAEPASAEPAPAV) are disordered. Positions 119–147 (AAEQAAAAEAAAPAAAPAEPASAEPAPAV) are enriched in low complexity.

Belongs to the bacterial ribosomal protein bS6 family.

Binds together with bS18 to 16S ribosomal RNA. The protein is Small ribosomal subunit protein bS6 of Koribacter versatilis (strain Ellin345).